A 711-amino-acid chain; its full sequence is Ribosomal RNA large subunit methyltransferase K/L (711 aa).

The THUMP domain maps to 42–153; it reads DAQRAVLWSR…KGRATISVDL (112 aa).

The protein belongs to the methyltransferase superfamily. RlmKL family.

It is found in the cytoplasm. It carries out the reaction guanosine(2445) in 23S rRNA + S-adenosyl-L-methionine = N(2)-methylguanosine(2445) in 23S rRNA + S-adenosyl-L-homocysteine + H(+). The catalysed reaction is guanosine(2069) in 23S rRNA + S-adenosyl-L-methionine = N(2)-methylguanosine(2069) in 23S rRNA + S-adenosyl-L-homocysteine + H(+). In terms of biological role, specifically methylates the guanine in position 2445 (m2G2445) and the guanine in position 2069 (m7G2069) of 23S rRNA. This is Ribosomal RNA large subunit methyltransferase K/L from Xanthomonas oryzae pv. oryzae (strain MAFF 311018).